We begin with the raw amino-acid sequence, 410 residues long: Putative transposase Rv3428c (410 aa).

Positions 40–220 (VPRGPVDAGS…QPLRMFEAVE (181 aa)) constitute an Integrase catalytic domain. The tract at residues 390 to 410 (AANEPTTSSPASTAGGVPARP) is disordered.

It belongs to the transposase IS21/IS408/IS1162 family.

This chain is Putative transposase Rv3428c, found in Mycobacterium tuberculosis (strain ATCC 25618 / H37Rv).